We begin with the raw amino-acid sequence, 456 residues long: Dual-specificity RNA methyltransferase RlmN (456 aa).

The disordered stretch occupies residues 1 to 21 (MIQRHLGQPRLIQNGGDAGGV). The active-site Proton acceptor is Glu175. The Radical SAM core domain maps to 183 to 416 (DEERGAVCIS…QDAGYSAPIR (234 aa)). Cys190 and Cys427 are joined by a disulfide. Residues Cys197, Cys201, and Cys204 each coordinate [4Fe-4S] cluster. S-adenosyl-L-methionine is bound by residues 253-254 (GE), Ser285, 307-309 (SLH), and Asn384. The S-methylcysteine intermediate role is filled by Cys427.

This sequence belongs to the radical SAM superfamily. RlmN family. [4Fe-4S] cluster serves as cofactor.

It is found in the cytoplasm. It catalyses the reaction adenosine(2503) in 23S rRNA + 2 reduced [2Fe-2S]-[ferredoxin] + 2 S-adenosyl-L-methionine = 2-methyladenosine(2503) in 23S rRNA + 5'-deoxyadenosine + L-methionine + 2 oxidized [2Fe-2S]-[ferredoxin] + S-adenosyl-L-homocysteine. The catalysed reaction is adenosine(37) in tRNA + 2 reduced [2Fe-2S]-[ferredoxin] + 2 S-adenosyl-L-methionine = 2-methyladenosine(37) in tRNA + 5'-deoxyadenosine + L-methionine + 2 oxidized [2Fe-2S]-[ferredoxin] + S-adenosyl-L-homocysteine. Functionally, specifically methylates position 2 of adenine 2503 in 23S rRNA and position 2 of adenine 37 in tRNAs. m2A2503 modification seems to play a crucial role in the proofreading step occurring at the peptidyl transferase center and thus would serve to optimize ribosomal fidelity. In Paramagnetospirillum magneticum (strain ATCC 700264 / AMB-1) (Magnetospirillum magneticum), this protein is Dual-specificity RNA methyltransferase RlmN.